A 378-amino-acid polypeptide reads, in one-letter code: L-lactate dehydrogenase (378 aa).

The FMN hydroxy acid dehydrogenase domain maps to 1 to 378 (MIISASTDYR…ELSRDSLVKR (378 aa)). Tyr-24 serves as a coordination point for substrate. Residues Ser-106 and Gln-127 each contribute to the FMN site. A substrate-binding site is contributed by Tyr-129. Thr-155 is a binding site for FMN. Arg-164 is a substrate binding site. Lys-251 lines the FMN pocket. His-275 (proton acceptor) is an active-site residue. Position 278 (Arg-278) interacts with substrate. 306-330 (DSGIRTGLDVVRMLALGADCTMLGR) provides a ligand contact to FMN.

It belongs to the FMN-dependent alpha-hydroxy acid dehydrogenase family. It depends on FMN as a cofactor.

It localises to the cell inner membrane. The catalysed reaction is (S)-lactate + A = pyruvate + AH2. Functionally, catalyzes the conversion of L-lactate to pyruvate. Is coupled to the respiratory chain. The polypeptide is L-lactate dehydrogenase (Vibrio cholerae serotype O1 (strain ATCC 39315 / El Tor Inaba N16961)).